A 394-amino-acid chain; its full sequence is HORMA domain-containing protein 1 (394 aa).

One can recognise an HORMA domain in the interval 24–226 (QQSLVLVKRL…TPFHTFKVKV (203 aa)). Residues 306-394 (KESPELSISH…RKFSEPKEHI (89 aa)) are disordered. A compositionally biased stretch (polar residues) spans 311–325 (LSISHSQVEQLVSKT). A compositionally biased stretch (basic and acidic residues) spans 353–362 (KSKESRKRSQ). Residue S376 is modified to Phosphoserine. The short motif at 383–386 (KRRK) is the Nuclear localization signal element.

Interacts with HORMAD2. Interacts with IHO1. Post-translationally, phosphorylated at Ser-377 in a SPO11-dependent manner.

The protein localises to the nucleus. The protein resides in the chromosome. Plays a key role in meiotic progression. Regulates 3 different functions during meiosis: ensures that sufficient numbers of processed DNA double-strand breaks (DSBs) are available for successful homology search by increasing the steady-state numbers of single-stranded DSB ends. Promotes synaptonemal-complex formation independently of its role in homology search. Plays a key role in the male mid-pachytene checkpoint and the female meiotic prophase checkpoint: required for efficient build-up of ATR activity on unsynapsed chromosome regions, a process believed to form the basis of meiotic silencing of unsynapsed chromatin (MSUC) and meiotic prophase quality control in both sexes. This Sus scrofa (Pig) protein is HORMA domain-containing protein 1 (HORMAD1).